Consider the following 728-residue polypeptide: 1,4-alpha-glucan branching enzyme GlgB (728 aa).

Residue Asp-405 is the Nucleophile of the active site. The active-site Proton donor is Glu-458.

Belongs to the glycosyl hydrolase 13 family. GlgB subfamily. Monomer.

The enzyme catalyses Transfers a segment of a (1-&gt;4)-alpha-D-glucan chain to a primary hydroxy group in a similar glucan chain.. The protein operates within glycan biosynthesis; glycogen biosynthesis. Catalyzes the formation of the alpha-1,6-glucosidic linkages in glycogen by scission of a 1,4-alpha-linked oligosaccharide from growing alpha-1,4-glucan chains and the subsequent attachment of the oligosaccharide to the alpha-1,6 position. The polypeptide is 1,4-alpha-glucan branching enzyme GlgB (Escherichia coli O6:H1 (strain CFT073 / ATCC 700928 / UPEC)).